The following is a 456-amino-acid chain: Serine/threonine-protein kinase PBS1 (456 aa).

A disordered region spans residues 1–57; sequence MGCFSCFDSSDDEKLNPVDESNHGQKKQSQPTVSNNISGLPSGGEKLSSKTNGGSKR. Gly-2 carries the N-myristoyl glycine lipid modification. S-palmitoyl cysteine attachment occurs at residues Cys-3 and Cys-6. Basic and acidic residues predominate over residues 12–23; that stretch reads DEKLNPVDESNH. Ser-21 carries the post-translational modification Phosphoserine. Residues 27–39 show a composition bias toward polar residues; it reads KQSQPTVSNNISG. Residues 86-363 form the Protein kinase domain; that stretch reads FHPDTFLGEG…ADVVTALSYL (278 aa). Residues 92 to 100 and Lys-115 contribute to the ATP site; that span reads LGEGGFGRV. Phosphotyrosine is present on Tyr-160. The active-site Proton acceptor is the Asp-213. Ser-217 and Ser-247 each carry phosphoserine. Phosphothreonine occurs at positions 248 and 253. Tyr-261 carries the post-translational modification Phosphotyrosine. The short motif at 292 to 296 is the Recognition motif required for RPS5-mediated plant resistance to P.syringae element; that stretch reads SEMPH. Residues 368-456 are disordered; sequence YDPSKDDSRR…QGTSESNSTG (89 aa). Composition is skewed to basic and acidic residues over residues 370-392 and 400-429; these read PSKDDSRRNRDERGARLITRNDD and FDLEGSEKEDSPRETARILNRDINRERAVA. Residues 446–456 show a composition bias toward polar residues; the sequence is EQGTSESNSTG.

Belongs to the protein kinase superfamily. Ser/Thr protein kinase family. In terms of assembly, in infected plant cells, it interacts with the P.syringae virulence protein avrPphB. In uninfected plants, autophosphorylated form interacts with RPS5. Interacts with FLS2. Cleaved by avrPphB in infected plant cells. Its cleavage serves as a signal that triggers the RPS5-mediated defense system. In terms of processing, autophosphorylates. Autophosphorylation may be required to trigger the RPS5-mediated plant defense system. Post-translationally, palmitoylation at Cys-3 and Cys-6 are required for plasma membrane location that is essential for the RPS5-mediated plant defense response.

The protein resides in the cell membrane. The enzyme catalyses L-seryl-[protein] + ATP = O-phospho-L-seryl-[protein] + ADP + H(+). The catalysed reaction is L-threonyl-[protein] + ATP = O-phospho-L-threonyl-[protein] + ADP + H(+). Functionally, protein kinase required for plant defense mechanism mediated by the disease resistance (R) protein RPS5. In case of infection by Pseudomonas syringae, AvrPphB triggers RPS5-mediated defense mechanism via the cleavage of PBS1. Both kinase activity and cleavage by avrPphB are independently required to trigger the RPS5-mediated resistance. Contributes to PAMP-triggered immunity (PTI) signaling and defense responses downstream of FLS2. The chain is Serine/threonine-protein kinase PBS1 from Arabidopsis thaliana (Mouse-ear cress).